Consider the following 500-residue polypeptide: Cholesterol 24-hydroxylase (500 aa).

Residues 3 to 23 (PGLLLLGSAVLLAFGLCCTFV) traverse the membrane as a helical segment. C437 is a binding site for heme.

It belongs to the cytochrome P450 family. Requires heme as cofactor. As to expression, expressed in brain. The mRNA was broadly distributed with higher levels in gray matter zones and lower levels in regions rich in white matter. Not detected in fetal sample but its expression increases linearly with age.

The protein localises to the endoplasmic reticulum membrane. Its subcellular location is the microsome membrane. The protein resides in the postsynapse. It localises to the presynapse. It is found in the cell projection. The protein localises to the dendrite. The catalysed reaction is cholesterol + reduced [NADPH--hemoprotein reductase] + O2 = (24S)-hydroxycholesterol + oxidized [NADPH--hemoprotein reductase] + H2O + H(+). It catalyses the reaction cholestanol + reduced [NADPH--hemoprotein reductase] + O2 = (24S)-hydroxycholestanol + oxidized [NADPH--hemoprotein reductase] + H2O + H(+). The enzyme catalyses 7-dehydrocholesterol + reduced [NADPH--hemoprotein reductase] + O2 = cholesta-5,7-dien-3beta,24S-diol + oxidized [NADPH--hemoprotein reductase] + H2O + H(+). It carries out the reaction 7-dehydrocholesterol + reduced [NADPH--hemoprotein reductase] + O2 = cholesta-5,7-dien-3beta,25-diol + oxidized [NADPH--hemoprotein reductase] + H2O + H(+). The catalysed reaction is desmosterol + reduced [NADPH--hemoprotein reductase] + O2 = (24Z),26-hydroxydesmosterol + oxidized [NADPH--hemoprotein reductase] + H2O + H(+). It catalyses the reaction desmosterol + reduced [NADPH--hemoprotein reductase] + O2 = (24S)-25-epoxycholesterol + oxidized [NADPH--hemoprotein reductase] + H2O + H(+). The enzyme catalyses 4beta-hydroxycholesterol + reduced [NADPH--hemoprotein reductase] + O2 = 4beta,24S-dihydroxycholesterol + oxidized [NADPH--hemoprotein reductase] + H2O + H(+). It carries out the reaction (24S)-hydroxycholesterol + reduced [NADPH--hemoprotein reductase] + O2 = (24S,25R)-24,26-dihydroxycholesterol + oxidized [NADPH--hemoprotein reductase] + H2O + H(+). The catalysed reaction is (24S)-hydroxycholesterol + reduced [NADPH--hemoprotein reductase] + O2 = 24S,25-dihydroxycholesterol + oxidized [NADPH--hemoprotein reductase] + H2O + H(+). It catalyses the reaction 7alpha-hydroxycholesterol + reduced [NADPH--hemoprotein reductase] + O2 = (24S)-7alpha-dihydroxycholesterol + oxidized [NADPH--hemoprotein reductase] + H2O + H(+). The enzyme catalyses progesterone + reduced [NADPH--hemoprotein reductase] + O2 = 17alpha-hydroxyprogesterone + oxidized [NADPH--hemoprotein reductase] + H2O + H(+). It carries out the reaction testosterone + reduced [NADPH--hemoprotein reductase] + O2 = 16beta,17beta-dihydroxyandrost-4-en-3-one + oxidized [NADPH--hemoprotein reductase] + H2O + H(+). The catalysed reaction is testosterone + reduced [NADPH--hemoprotein reductase] + O2 = 2-hydroxytestosterone + oxidized [NADPH--hemoprotein reductase] + H2O + H(+). It catalyses the reaction testosterone + reduced [NADPH--hemoprotein reductase] + O2 = 6beta,17beta-dihydroxyandrost-4-en-3-one + oxidized [NADPH--hemoprotein reductase] + H2O + H(+). It functions in the pathway steroid metabolism; cholesterol degradation. Its pathway is lipid metabolism; C21-steroid hormone metabolism. In terms of biological role, P450 monooxygenase that plays a major role in cholesterol homeostasis in the brain. Primarily catalyzes the hydroxylation (with S stereochemistry) at C-24 of cholesterol side chain, triggering cholesterol diffusion out of neurons and its further degradation. By promoting constant cholesterol elimination in neurons, may activate the mevalonate pathway and coordinate the synthesis of new cholesterol and nonsterol isoprenoids involved in synaptic activity and learning. Further hydroxylates cholesterol derivatives and hormone steroids on both the ring and side chain of these molecules, converting them into active oxysterols involved in lipid signaling and biosynthesis. Acts as an epoxidase converting cholesta-5,24-dien-3beta-ol/desmosterol into (24S),25-epoxycholesterol, an abundant lipid ligand of nuclear NR1H2 and NR1H3 receptors shown to promote neurogenesis in developing brain. May also catalyze the oxidative metabolism of xenobiotics, such as clotrimazole. This Homo sapiens (Human) protein is Cholesterol 24-hydroxylase.